We begin with the raw amino-acid sequence, 166 residues long: Large ribosomal subunit protein mL49 (166 aa).

Positions 56–78 (RIPDPPKHEHYPTPSGWQPPRDP) are disordered.

It belongs to the mitochondrion-specific ribosomal protein mL49 family. As to quaternary structure, interacts with OXA1L.

The protein localises to the mitochondrion. The chain is Large ribosomal subunit protein mL49 (MRPL49) from Macaca fascicularis (Crab-eating macaque).